A 124-amino-acid chain; its full sequence is Small ribosomal subunit protein bS6 (124 aa).

Residues 96–124 (ETAPSPMMKEVQREEARKAAQTTTEGQAA) form a disordered region. Residues 115-124 (AQTTTEGQAA) are compositionally biased toward polar residues.

It belongs to the bacterial ribosomal protein bS6 family.

Functionally, binds together with bS18 to 16S ribosomal RNA. This chain is Small ribosomal subunit protein bS6, found in Cupriavidus pinatubonensis (strain JMP 134 / LMG 1197) (Cupriavidus necator (strain JMP 134)).